A 213-amino-acid chain; its full sequence is High frequency lysogenization protein HflD homolog (213 aa).

The protein belongs to the HflD family.

The protein localises to the cytoplasm. Its subcellular location is the cell inner membrane. This chain is High frequency lysogenization protein HflD homolog, found in Klebsiella pneumoniae (strain 342).